Reading from the N-terminus, the 110-residue chain is UPF0339 protein SO_3888 (110 aa).

Tandem repeats lie at residues 10-58 (SSND…RYAK) and 61-109 (AKND…IKDL).

This sequence belongs to the UPF0339 family. Duplicated subfamily.

The protein is UPF0339 protein SO_3888 of Shewanella oneidensis (strain ATCC 700550 / JCM 31522 / CIP 106686 / LMG 19005 / NCIMB 14063 / MR-1).